A 130-amino-acid chain; its full sequence is Small ribosomal subunit protein uS8 (130 aa).

The protein belongs to the universal ribosomal protein uS8 family. Part of the 30S ribosomal subunit. Contacts proteins S5 and S12.

Its function is as follows. One of the primary rRNA binding proteins, it binds directly to 16S rRNA central domain where it helps coordinate assembly of the platform of the 30S subunit. This Pasteurella multocida (strain Pm70) protein is Small ribosomal subunit protein uS8.